The following is a 358-amino-acid chain: Peptide chain release factor 1 (358 aa).

At Q233 the chain carries N5-methylglutamine.

It belongs to the prokaryotic/mitochondrial release factor family. Methylated by PrmC. Methylation increases the termination efficiency of RF1.

The protein resides in the cytoplasm. Its function is as follows. Peptide chain release factor 1 directs the termination of translation in response to the peptide chain termination codons UAG and UAA. The chain is Peptide chain release factor 1 from Clostridium botulinum (strain Okra / Type B1).